The sequence spans 524 residues: Dihydromonacolin L monooxygenase mokC (524 aa).

The Cytoplasmic segment spans residues 1–25; it reads MTVPTDTVSRRLQSLAWSDIKQHAP. A helical; Signal-anchor for type II membrane protein transmembrane segment spans residues 26–47; it reads WLPSSRTLVSGFLCLILLQILY. Residues 48–524 lie on the Lumenal side of the membrane; that stretch reads SRGRKSDLRV…LMMRRRDEDL (477 aa). Residues Asn-396 and Asn-401 are each glycosylated (N-linked (GlcNAc...) asparagine). Cys-467 serves as a coordination point for heme.

It belongs to the cytochrome P450 family. It depends on heme as a cofactor.

Its subcellular location is the endoplasmic reticulum membrane. The catalysed reaction is dihydromonacolin L carboxylate + reduced [NADPH--hemoprotein reductase] + O2 = monacolin L carboxylate + oxidized [NADPH--hemoprotein reductase] + 2 H2O + H(+). The enzyme catalyses monacolin L carboxylate + reduced [NADPH--hemoprotein reductase] + O2 = monacolin J carboxylate + oxidized [NADPH--hemoprotein reductase] + H2O + H(+). It functions in the pathway polyketide biosynthesis; lovastatin biosynthesis. In terms of biological role, cytochrome P450 monooxygenase; part of the gene cluster that mediates the biosynthesis of monakolin K, also known as lovastatin, and which acts as a potent competitive inhibitor of HMG-CoA reductase. Monakolin K biosynthesis is performed in two stages. The first stage is catalyzed by the nonaketide synthase mokA, which belongs to type I polyketide synthases and catalyzes the iterative nine-step formation of the polyketide. This PKS stage is completed by the action of dehydrogenase mokE, which catalyzes the NADPH-dependent reduction of the unsaturated tetra-, penta- and heptaketide intermediates that arise during the mokA-mediated biosynthesis of the nonaketide chain and leads to dihydromonacolin L. Covalently bound dihydromonacolin L is released from mokA by the mokD esterase. Conversion of dihydromonacolin L into monacolin L and then monacolin J is subsequently performed with the participation of molecular oxygen and P450 monoogygenase mokC. Finally, mokF performs the conversion of monacoline J to monacoline K through the addition of the side-chain diketide moiety (2R)-2-methylbutanoate produced by the diketide synthase mokB. This is Dihydromonacolin L monooxygenase mokC from Monascus pilosus (Red mold).